We begin with the raw amino-acid sequence, 419 residues long: Probable 3-isopropylmalate dehydratase large subunit (419 aa).

3 residues coordinate [4Fe-4S] cluster: cysteine 299, cysteine 359, and cysteine 362.

It belongs to the aconitase/IPM isomerase family. LeuC type 2 subfamily. As to quaternary structure, heterodimer of LeuC and LeuD. [4Fe-4S] cluster serves as cofactor.

It catalyses the reaction (2R,3S)-3-isopropylmalate = (2S)-2-isopropylmalate. It participates in amino-acid biosynthesis; L-leucine biosynthesis; L-leucine from 3-methyl-2-oxobutanoate: step 2/4. In terms of biological role, catalyzes the isomerization between 2-isopropylmalate and 3-isopropylmalate, via the formation of 2-isopropylmaleate. This Methanothermobacter thermautotrophicus (strain ATCC 29096 / DSM 1053 / JCM 10044 / NBRC 100330 / Delta H) (Methanobacterium thermoautotrophicum) protein is Probable 3-isopropylmalate dehydratase large subunit.